The primary structure comprises 163 residues: CASP-like protein 1C2 (163 aa).

Topologically, residues 1–7 (MAKLHRL) are cytoplasmic. Residues 8–28 (ISAVLRLAAAGAAAAAAVIMV) traverse the membrane as a helical segment. Topologically, residues 29-50 (TSHETTSLFGIEMEAKYSYTPS) are extracellular. Residues 51 to 71 (FVFFVVAFAVTFAYSLLAAVL) traverse the membrane as a helical segment. At 72-80 (VRPGTTASR) the chain is on the cytoplasmic side. A helical membrane pass occupies residues 81-101 (LVLLSDVTVGMLLTGAVAATG). At 102–129 (AISQVGKSGNEHAGWLPICAQVQAYCGH) the chain is on the extracellular side. A helical transmembrane segment spans residues 130 to 150 (VMGALIAGFVSLLLYFLIIMY). The Cytoplasmic portion of the chain corresponds to 151–163 (SLHAVAEPLCSCH).

It belongs to the Casparian strip membrane proteins (CASP) family. Homodimer and heterodimers.

The protein resides in the cell membrane. The sequence is that of CASP-like protein 1C2 from Zea mays (Maize).